The primary structure comprises 346 residues: [LysW]-lysine/[LysW]-ornithine hydrolase (346 aa).

Histidine 68 is a Zn(2+) binding site. Aspartate 70 is an active-site residue. Aspartate 92 is a binding site for Zn(2+). Catalysis depends on glutamate 122, which acts as the Proton acceptor. Residues glutamate 123, glutamate 146, and histidine 317 each contribute to the Zn(2+) site.

The protein belongs to the peptidase M20A family. LysK subfamily. Zn(2+) is required as a cofactor. Requires Co(2+) as cofactor.

It is found in the cytoplasm. It carries out the reaction [amino-group carrier protein]-C-terminal-gamma-(L-lysyl)-L-glutamate + H2O = [amino-group carrier protein]-C-terminal-L-glutamate + L-lysine. The enzyme catalyses [amino-group carrier protein]-C-terminal-gamma-(L-ornithyl)-L-glutamate + H2O = [amino-group carrier protein]-C-terminal-L-glutamate + L-ornithine. The protein operates within amino-acid biosynthesis; L-lysine biosynthesis via AAA pathway; L-lysine from L-alpha-aminoadipate (Thermus route): step 5/5. It functions in the pathway amino-acid biosynthesis; L-arginine biosynthesis. Catalyzes the release of L-lysine from [LysW]-gamma-L-lysine and the release of L-ornithine from [LysW]-L-ornithine. The protein is [LysW]-lysine/[LysW]-ornithine hydrolase of Saccharolobus islandicus (strain M.16.27) (Sulfolobus islandicus).